The following is a 203-amino-acid chain: DNA-directed RNA polymerase III subunit rpc8 (203 aa).

This sequence belongs to the eukaryotic RPB7/RPC8 RNA polymerase subunit family. Component of the RNA polymerase III (Pol III) complex consisting of 17 subunits. Rpc25/rpc8 and rpc17/rpc9 form a Pol III subcomplex.

Its subcellular location is the cytoplasm. The protein localises to the nucleus. Functionally, DNA-dependent RNA polymerase catalyzes the transcription of DNA into RNA using the four ribonucleoside triphosphates as substrates. Specific peripheric component of RNA polymerase III which synthesizes small RNAs, such as 5S rRNA and tRNA. This is DNA-directed RNA polymerase III subunit rpc8 (rpc25) from Schizosaccharomyces pombe (strain 972 / ATCC 24843) (Fission yeast).